Consider the following 214-residue polypeptide: Small ribosomal subunit protein uS5 (214 aa).

The 64-residue stretch at 54-117 folds into the S5 DRBM domain; it reads LKYEVMDIKI…KNAKMNIIPV (64 aa).

The protein belongs to the universal ribosomal protein uS5 family. As to quaternary structure, part of the 30S ribosomal subunit. Contacts protein S4.

Functionally, with S4 and S12 plays an important role in translational accuracy. This Sulfurisphaera tokodaii (strain DSM 16993 / JCM 10545 / NBRC 100140 / 7) (Sulfolobus tokodaii) protein is Small ribosomal subunit protein uS5.